Consider the following 155-residue polypeptide: Riboflavin kinase (155 aa).

Residues Gly15, Lys21, Thr27, and Asn29 each contribute to the ATP site. Residues Thr27 and Asn29 each coordinate Mg(2+). Catalysis depends on Glu79, which acts as the Nucleophile. Positions 82, 84, and 91 each coordinate ATP. Residues Arg104, Lys107, and Phe109 each contribute to the FMN site.

Monomer. Directly interacts with TNFRSF1A death domain. TNFRSF1A-binding may be supported by TRADD. In the absence of TNFRSF1A, interacts with TRADD. Independently of TNFRSF1A, interacts with the NADPH oxidase subunit CYBA. It depends on Zn(2+) as a cofactor. Mg(2+) is required as a cofactor. Detected in brain, placenta and urinary bladder.

It is found in the cytoplasm. The catalysed reaction is riboflavin + ATP = FMN + ADP + H(+). Its pathway is cofactor biosynthesis; FMN biosynthesis; FMN from riboflavin (ATP route): step 1/1. Its function is as follows. Catalyzes the phosphorylation of riboflavin (vitamin B2) to form flavin-mononucleotide (FMN), hence rate-limiting enzyme in the synthesis of FAD. Essential for TNF-induced reactive oxygen species (ROS) production. Through its interaction with both TNFRSF1A and CYBA, physically and functionally couples TNFRSF1A to NADPH oxidase. TNF-activation of RFK may enhance the incorporation of FAD in NADPH oxidase, a critical step for the assembly and activation of NADPH oxidase. In Homo sapiens (Human), this protein is Riboflavin kinase (RFK).